The following is a 1943-amino-acid chain: Trichohyalin (1943 aa).

The interval 1–91 is S-100-like; it reads MSPLLRSICD…AQACYYALGQ (91 aa). EF-hand domains are found at residues 23 to 48 and 49 to 84; these read CDGA…LRRP and HDPK…VAQA. Ca(2+) is bound by residues D32, D62, D64, N66, R68, and E73. 3 disordered regions span residues 110–164, 186–209, and 222–274; these read LQDR…LEQR, RRAE…DEEQ, and GREE…LQEE. Basic and acidic residues predominate over residues 197–209; sequence KGHETEEFPDEEQ. The stretch at 314-326 is one 1-1; approximate repeat; that stretch reads RREQQEERREQQE. Residues 314-377 form a 5 X 13 AA tandem repeats of R-R-E-Q-E-E-E-R-R-E-Q-Q-L region; it reads RREQQEERRE…QEEERREQQL (64 aa). The 1-2; approximate repeat unit spans residues 327-339; the sequence is RREQQEERREQQL. One copy of the 1-3; approximate repeat lies at 340 to 351; that stretch reads RREQEERREQQL. Tandem repeats lie at residues 352-364, 365-377, 378-383, 384-389, 390-395, 396-401, 402-407, 408-413, 414-419, and 420-425. The segment at 378–425 is 8 X 6 AA tandem repeats of R-R-E-Q-Q-L; it reads RREQQLRREQQLRREQQLRREQQLRREQQLRREQQLRREQQLRREQQL. A 9 X 28 AA approximate tandem repeats region spans residues 425 to 683; sequence LRREQEEERH…REHEEERREQ (259 aa). Disordered stretches follow at residues 426-485, 509-546, 608-819, and 837-872; these read RREQ…EERR, REQE…EERR, ERLE…EKEQ, and EEQL…RRDQ. 4 stretches are compositionally biased toward basic and acidic residues: residues 608 to 684, 724 to 781, 789 to 812, and 859 to 872; these read ERLE…REQE, RKQE…ERGR, PLRE…RFLP, and DQER…RRDQ. Repeat copies occupy residues 906–935, 936–965, 966–995, 996–1025, 1026–1055, 1056–1085, 1086–1115, 1116–1145, 1146–1175, and 1176–1204. Residues 906–1204 are 10 X 30 AA tandem repeats; it reads LQEEEEELQR…RERQYREEEE (299 aa). The segment covering 950-992 has biased composition (basic and acidic residues); it reads KRRRQERERQYRKDKKLQQKEEQLLGEEPEKRRRQEREKKYRE. Disordered stretches follow at residues 950–1000, 1046–1120, 1137–1162, 1193–1371, 1404–1435, 1492–1691, 1757–1820, 1834–1864, and 1876–1928; these read KRRR…QQEE, RERQ…QQEE, ERQY…EKRR, QERE…RHQE, REQQ…FREE, QQLR…ERDR, PERE…RDGK, EQRL…EQEL, and RERK…VRSS. Residues 1052 to 1064 are compositionally biased toward acidic residues; it reads EEEELQQEEEQLL. Composition is skewed to basic and acidic residues over residues 1065 to 1085 and 1092 to 1111; these read GEER…KEEE and QLLR…RQCR. A compositionally biased stretch (acidic residues) spans 1142 to 1151; sequence EEEEVQQEEE. A compositionally biased stretch (basic and acidic residues) spans 1152–1162; sequence QLLREEPEKRR. Composition is skewed to basic and acidic residues over residues 1214–1263 and 1274–1371; these read YRDE…DRQS and QQER…RHQE. Residues 1292 to 1894 form a 23 X 26 AA approximate tandem repeats region; that stretch reads HFPEEEQLER…IRRQQKEEQR (603 aa). Basic and acidic residues-rich tracts occupy residues 1492–1524, 1533–1673, and 1682–1691; these read QQLR…EQQL, FLQE…REEE, and QQLRRQERDR. The segment covering 1876 to 1912 has biased composition (basic and acidic residues); it reads RERKLREEHIRRQQKEEQRHRQVGEIKSQEGKGHGRL.

The protein belongs to the S100-fused protein family. In terms of assembly, monomer. Post-translationally, substrate of transglutaminase. Some 200 arginines are probably converted to citrullines by peptidylarginine deimidase. As to expression, found in the hard keratinizing tissues such as the inner root sheath (IRS) of hair follicles and medulla, and in the filiform papillae of dorsal tongue epithelium.

Its function is as follows. Intermediate filament-associated protein that associates in regular arrays with keratin intermediate filaments (KIF) of the inner root sheath cells of the hair follicle and the granular layer of the epidermis. It later becomes cross-linked to KIF by isodipeptide bonds. It may serve as scaffold protein, together with involucrin, in the organization of the cell envelope or even anchor the cell envelope to the KIF network. It may be involved in its own calcium-dependent postsynthetic processing during terminal differentiation. In Homo sapiens (Human), this protein is Trichohyalin (TCHH).